The sequence spans 425 residues: MGMTMTQKILAKHAKLNEVKKGQLIEADLDVVLGNDITSPVAIREFEKLGIEDVYDKTKVVMVLDHFTPNKDIKSAEQCKFTRSFAKSKGVVNFFDVGDMGIEHVLLPEKGIVTAGDVIIGADSHTCTYGALGAFSTGVGSTDMGAGMATGKCWFKVPGAIKFVLKNKPNKWISGKDIILHIIGEIGVDGALYKSMEFCGDGVEYLSMDDRFTICNMAIEAGAKNGIFPVDDKTMEYINSHKCSTMTKDVNIYEADEDAVYDEVYEIDLAKLKETVAFPHLPENTRTVDEIDKDIKIDQVVIGSCTNGRISDLEVVAEIMKGKKVADGVRVMIFPGTQKVYLEAIEKGYITTFIEAGAAVSTPTCGPCLGGHMGILAAGEKSISTTNRNFVGRMGHVDSEVYLASPAVAAASAITGKISKPSEII.

[4Fe-4S] cluster-binding residues include cysteine 305, cysteine 365, and cysteine 368.

This sequence belongs to the aconitase/IPM isomerase family. LeuC type 2 subfamily. In terms of assembly, heterodimer of LeuC and LeuD. It depends on [4Fe-4S] cluster as a cofactor.

The catalysed reaction is (2R,3S)-3-isopropylmalate = (2S)-2-isopropylmalate. The protein operates within amino-acid biosynthesis; L-leucine biosynthesis; L-leucine from 3-methyl-2-oxobutanoate: step 2/4. Functionally, catalyzes the isomerization between 2-isopropylmalate and 3-isopropylmalate, via the formation of 2-isopropylmaleate. The chain is 3-isopropylmalate dehydratase large subunit from Clostridioides difficile (strain 630) (Peptoclostridium difficile).